The following is a 293-amino-acid chain: Protease HtpX homolog (293 aa).

Helical transmembrane passes span 7–26 (ASLL…ALLG) and 30–49 (GMVM…WYYS). Histidine 131 is a Zn(2+) binding site. Residue glutamate 132 is part of the active site. Histidine 135 serves as a coordination point for Zn(2+). Helical transmembrane passes span 148–168 (ATLA…FWFF) and 180–200 (IGAL…QLGI). Position 205 (glutamate 205) interacts with Zn(2+).

It belongs to the peptidase M48B family. Zn(2+) serves as cofactor.

It is found in the cell inner membrane. This chain is Protease HtpX homolog, found in Acaryochloris marina (strain MBIC 11017).